We begin with the raw amino-acid sequence, 871 residues long: Translation initiation factor IF-2 (871 aa).

Disordered stretches follow at residues 60–101 (KKNI…QEVK) and 184–203 (ESLK…KKES). The span at 61–72 (KNIKTPTAKKPK) shows a compositional bias: basic residues. Residues 73–101 (KENIKEQEKLNESEKKEPKKEEKLKQEVK) show a composition bias toward basic and acidic residues. A tr-type G domain is found at 370–537 (TRAPVITIMG…IVLLQADILE (168 aa)). The interval 379 to 386 (GHVDHGKT) is G1. 379 to 386 (GHVDHGKT) lines the GTP pocket. The G2 stretch occupies residues 404–408 (GITQH). Positions 425-428 (DTPG) are G3. Residues 425–429 (DTPGH) and 479–482 (NKMD) contribute to the GTP site. Residues 479–482 (NKMD) are G4. The G5 stretch occupies residues 515-517 (SAK).

Belongs to the TRAFAC class translation factor GTPase superfamily. Classic translation factor GTPase family. IF-2 subfamily.

Its subcellular location is the cytoplasm. One of the essential components for the initiation of protein synthesis. Protects formylmethionyl-tRNA from spontaneous hydrolysis and promotes its binding to the 30S ribosomal subunits. Also involved in the hydrolysis of GTP during the formation of the 70S ribosomal complex. This is Translation initiation factor IF-2 from Campylobacter jejuni subsp. jejuni serotype O:23/36 (strain 81-176).